A 436-amino-acid chain; its full sequence is Fasciclin-like arabinogalactan protein 15 (436 aa).

Residues 1–20 form the signal peptide; it reads MDDLSKLLFFLLLTISITTA. 2 consecutive FAS1 domains span residues 31–165 and 249–392; these read NSNS…ERLL and VKDF…DGVL. N-linked (GlcNAc...) asparagine glycans are attached at residues Asn-68 and Asn-271.

The protein belongs to the fasciclin-like AGP family.

It localises to the secreted. Its function is as follows. May be a cell surface adhesion protein. The polypeptide is Fasciclin-like arabinogalactan protein 15 (FLA15) (Arabidopsis thaliana (Mouse-ear cress)).